Consider the following 137-residue polypeptide: Putative pre-16S rRNA nuclease (137 aa).

Belongs to the YqgF nuclease family.

The protein resides in the cytoplasm. Functionally, could be a nuclease involved in processing of the 5'-end of pre-16S rRNA. The polypeptide is Putative pre-16S rRNA nuclease (Bacillus cereus (strain AH187)).